A 525-amino-acid polypeptide reads, in one-letter code: ATP synthase subunit alpha (525 aa).

171–178 (GDRQTGKS) contributes to the ATP binding site.

This sequence belongs to the ATPase alpha/beta chains family. F-type ATPases have 2 components, CF(1) - the catalytic core - and CF(0) - the membrane proton channel. CF(1) has five subunits: alpha(3), beta(3), gamma(1), delta(1), epsilon(1). CF(0) has three main subunits: a(1), b(2) and c(9-12). The alpha and beta chains form an alternating ring which encloses part of the gamma chain. CF(1) is attached to CF(0) by a central stalk formed by the gamma and epsilon chains, while a peripheral stalk is formed by the delta and b chains.

Its subcellular location is the cell inner membrane. It carries out the reaction ATP + H2O + 4 H(+)(in) = ADP + phosphate + 5 H(+)(out). In terms of biological role, produces ATP from ADP in the presence of a proton gradient across the membrane. The alpha chain is a regulatory subunit. This Flavobacterium johnsoniae (strain ATCC 17061 / DSM 2064 / JCM 8514 / BCRC 14874 / CCUG 350202 / NBRC 14942 / NCIMB 11054 / UW101) (Cytophaga johnsonae) protein is ATP synthase subunit alpha.